Here is a 288-residue protein sequence, read N- to C-terminus: Acetyl-coenzyme A carboxylase carboxyl transferase subunit beta (288 aa).

In terms of domain architecture, CoA carboxyltransferase N-terminal spans 34–288; that stretch reads LFAKCPACKH…HLVAFHGGGQ (255 aa). Residues Cys38, Cys41, Cys56, and Cys59 each coordinate Zn(2+). Residues 38–59 form a C4-type zinc finger; sequence CPACKHMIYKKDLGLAKICPTC.

This sequence belongs to the AccD/PCCB family. As to quaternary structure, acetyl-CoA carboxylase is a heterohexamer composed of biotin carboxyl carrier protein (AccB), biotin carboxylase (AccC) and two subunits each of ACCase subunit alpha (AccA) and ACCase subunit beta (AccD). The cofactor is Zn(2+).

Its subcellular location is the cytoplasm. The enzyme catalyses N(6)-carboxybiotinyl-L-lysyl-[protein] + acetyl-CoA = N(6)-biotinyl-L-lysyl-[protein] + malonyl-CoA. It functions in the pathway lipid metabolism; malonyl-CoA biosynthesis; malonyl-CoA from acetyl-CoA: step 1/1. Component of the acetyl coenzyme A carboxylase (ACC) complex. Biotin carboxylase (BC) catalyzes the carboxylation of biotin on its carrier protein (BCCP) and then the CO(2) group is transferred by the transcarboxylase to acetyl-CoA to form malonyl-CoA. The chain is Acetyl-coenzyme A carboxylase carboxyl transferase subunit beta from Streptococcus pyogenes serotype M6 (strain ATCC BAA-946 / MGAS10394).